The primary structure comprises 629 residues: tRNA uridine 5-carboxymethylaminomethyl modification enzyme MnmG (629 aa).

FAD contacts are provided by residues 13–18 (GGGHAG), Val125, and Ser180. An NAD(+)-binding site is contributed by 273–287 (GPRYCPSIEDKVMRF). Residue Gln370 participates in FAD binding.

This sequence belongs to the MnmG family. Homodimer. Heterotetramer of two MnmE and two MnmG subunits. FAD is required as a cofactor.

It localises to the cytoplasm. Functionally, NAD-binding protein involved in the addition of a carboxymethylaminomethyl (cmnm) group at the wobble position (U34) of certain tRNAs, forming tRNA-cmnm(5)s(2)U34. This is tRNA uridine 5-carboxymethylaminomethyl modification enzyme MnmG from Salmonella paratyphi A (strain ATCC 9150 / SARB42).